The following is a 441-amino-acid chain: Arginine biosynthesis bifunctional protein ArgJ, mitochondrial (441 aa).

Substrate contacts are provided by T177, K204, T215, E301, N436, and S441. The active-site Nucleophile is the T215.

The protein belongs to the ArgJ family. In terms of assembly, heterodimer of an alpha and a beta chain. Post-translationally, the alpha and beta chains are autoproteolytically processed from a single precursor protein within the mitochondrion.

The protein resides in the mitochondrion matrix. The catalysed reaction is N(2)-acetyl-L-ornithine + L-glutamate = N-acetyl-L-glutamate + L-ornithine. The enzyme catalyses L-glutamate + acetyl-CoA = N-acetyl-L-glutamate + CoA + H(+). It participates in amino-acid biosynthesis; L-arginine biosynthesis; L-ornithine and N-acetyl-L-glutamate from L-glutamate and N(2)-acetyl-L-ornithine (cyclic): step 1/1. The protein operates within amino-acid biosynthesis; L-arginine biosynthesis; N(2)-acetyl-L-ornithine from L-glutamate: step 1/4. Catalyzes two activities which are involved in the cyclic version of arginine biosynthesis: the synthesis of acetylglutamate from glutamate and acetyl-CoA, and of ornithine by transacetylation between acetylornithine and glutamate. This Kluyveromyces lactis (strain ATCC 8585 / CBS 2359 / DSM 70799 / NBRC 1267 / NRRL Y-1140 / WM37) (Yeast) protein is Arginine biosynthesis bifunctional protein ArgJ, mitochondrial.